Reading from the N-terminus, the 77-residue chain is Inhibitor of histone-like protein HU (77 aa).

In terms of assembly, interacts with host homodimeric histone-like protein (HU) hupA; thereby replacing dsDNA from the HU-DNA complex.

Its function is as follows. Acts as a host growth inhibitor by inhibiting DNA-binding of microbial histone-like protein HU, thereby preventing chromosome segregation and causing filamentous cell morphology and growth defects in the host. The protein is Inhibitor of histone-like protein HU of Bacillus phage SP01 (Bacteriophage SP01).